The following is a 157-amino-acid chain: SsrA-binding protein (157 aa).

It belongs to the SmpB family.

The protein resides in the cytoplasm. In terms of biological role, required for rescue of stalled ribosomes mediated by trans-translation. Binds to transfer-messenger RNA (tmRNA), required for stable association of tmRNA with ribosomes. tmRNA and SmpB together mimic tRNA shape, replacing the anticodon stem-loop with SmpB. tmRNA is encoded by the ssrA gene; the 2 termini fold to resemble tRNA(Ala) and it encodes a 'tag peptide', a short internal open reading frame. During trans-translation Ala-aminoacylated tmRNA acts like a tRNA, entering the A-site of stalled ribosomes, displacing the stalled mRNA. The ribosome then switches to translate the ORF on the tmRNA; the nascent peptide is terminated with the 'tag peptide' encoded by the tmRNA and targeted for degradation. The ribosome is freed to recommence translation, which seems to be the essential function of trans-translation. The sequence is that of SsrA-binding protein from Clostridium kluyveri (strain NBRC 12016).